The primary structure comprises 243 residues: Protein GID8 homolog (243 aa).

The LisH domain maps to 40 to 72 (RKEDMNTLVMNFLVTEGYVEAAEKFQRESGTKP). A CTLH domain is found at 78-135 (TITDRMAVKKAVQNGNVEDAIEKVNDLNPEILDTNPELFFHLQQQRLIELIRQGKTEE).

The protein belongs to the GID8 family. Interacts with RANBPM.

It is found in the cytoplasm. This chain is Protein GID8 homolog, found in Arabidopsis thaliana (Mouse-ear cress).